Reading from the N-terminus, the 227-residue chain is MSASADHTFDIKSARLNLFSIRLRSTRLADITRDLDNRFSADSPFSRTPAMLDVSQVNPVELDYRGLVARFAQYGIHLVGVRPTPAGLEGALDDAGLLPLGGDEALDESRLEDEPQPQTLVIDKPVRAGQQVYARGGNLVVLATVSAGAEVIADGDIHIYGSLRGRALAGARGQRDARIFVRSMQAELLSIAGIWRTLEQDLPAALASRPLQVLLESDKIVMRALPD.

It belongs to the MinC family. In terms of assembly, interacts with MinD and FtsZ.

Functionally, cell division inhibitor that blocks the formation of polar Z ring septums. Rapidly oscillates between the poles of the cell to destabilize FtsZ filaments that have formed before they mature into polar Z rings. Prevents FtsZ polymerization. This Laribacter hongkongensis (strain HLHK9) protein is Probable septum site-determining protein MinC.